The sequence spans 269 residues: Putative pyruvate, phosphate dikinase regulatory protein (269 aa).

147–154 (GLSRTSKT) lines the ADP pocket.

Belongs to the pyruvate, phosphate/water dikinase regulatory protein family. PDRP subfamily.

It catalyses the reaction N(tele)-phospho-L-histidyl/L-threonyl-[pyruvate, phosphate dikinase] + ADP = N(tele)-phospho-L-histidyl/O-phospho-L-threonyl-[pyruvate, phosphate dikinase] + AMP + H(+). The enzyme catalyses N(tele)-phospho-L-histidyl/O-phospho-L-threonyl-[pyruvate, phosphate dikinase] + phosphate + H(+) = N(tele)-phospho-L-histidyl/L-threonyl-[pyruvate, phosphate dikinase] + diphosphate. Functionally, bifunctional serine/threonine kinase and phosphorylase involved in the regulation of the pyruvate, phosphate dikinase (PPDK) by catalyzing its phosphorylation/dephosphorylation. The protein is Putative pyruvate, phosphate dikinase regulatory protein of Clostridium botulinum (strain 657 / Type Ba4).